Reading from the N-terminus, the 189-residue chain is DnaJ homolog subfamily C member 5G (189 aa).

The J domain maps to 17 to 98 (SLYAVLDLKK…KKRKIYDQHG (82 aa)). The disordered stretch occupies residues 154-189 (PEQDSGRKYQQNVQSQPPRSGAKCDFRSEENSEDDF). The segment covering 161–171 (KYQQNVQSQPP) has biased composition (polar residues).

Palmitoylated. Testis specific.

The protein resides in the membrane. This is DnaJ homolog subfamily C member 5G (DNAJC5G) from Homo sapiens (Human).